The primary structure comprises 259 residues: MYTLGIDVGSASSKAVILKDGKDIVAAEVVQVGTGSSGPQRALDKAFEVSGLKKEDISYTVATGYGRFNFSDADKQISEISCHAKGIYFLVPTARTIIDIGGQDAKAIRLDDKGGIKQFFMNDKCAAGTGRFLEVMARVLETTLDEMAELDEQATDTAPISSTCTVFAESEVISQLSNGVSRNNIIKGVHLSVASRACGLAYRGGLEKDVVMTGGVAKNAGVVRAVAGVLKTDVIVAPNPQTTGALGAALYAYEAAQKK.

[4Fe-4S] cluster is bound by residues cysteine 125 and cysteine 164.

In terms of assembly, homodimer. It depends on [4Fe-4S] cluster as a cofactor.

Functionally, required for the activation of lactoyl-CoA dehydratase. This protein is extremely sensitive towards oxygen. In Anaerotignum propionicum (Clostridium propionicum), this protein is Activator of lactoyl-CoA dehydratase (lcdC).